A 134-amino-acid polypeptide reads, in one-letter code: Urease subunit beta (134 aa).

It belongs to the urease beta subunit family. As to quaternary structure, heterotrimer of UreA (gamma), UreB (beta) and UreC (alpha) subunits. Three heterotrimers associate to form the active enzyme.

It is found in the cytoplasm. The enzyme catalyses urea + 2 H2O + H(+) = hydrogencarbonate + 2 NH4(+). The protein operates within nitrogen metabolism; urea degradation; CO(2) and NH(3) from urea (urease route): step 1/1. This Staphylococcus saprophyticus subsp. saprophyticus (strain ATCC 15305 / DSM 20229 / NCIMB 8711 / NCTC 7292 / S-41) protein is Urease subunit beta.